The chain runs to 357 residues: Cell division control protein 10 (357 aa).

The Septin-type G domain maps to 34-306 (RGFQFNIMVV…ETFRSKQLIA (273 aa)). The interval 44 to 51 (GRSGLGKS) is G1 motif. GTP-binding positions include 44–51 (GRSGLGKS), Thr78, Gly104, 184–192 (KSDSLTLDE), Gly240, and Arg255. The G3 motif stretch occupies residues 101–104 (DTPG). The segment at 183–186 (AKSD) is G4 motif. The disordered stretch occupies residues 310-357 (NASNPNRQSQLQKDQGQTSQQSNQDLKNTSGVPNAPMFQSTTGTAAAR).

The protein belongs to the TRAFAC class TrmE-Era-EngA-EngB-Septin-like GTPase superfamily. Septin GTPase family.

The protein resides in the bud neck. In terms of biological role, plays a role in the cell cycle. Involved in the formation of the ring of filaments in the neck region at the mother-bud junction during mitosis. This Candida albicans (strain SC5314 / ATCC MYA-2876) (Yeast) protein is Cell division control protein 10 (CDC10).